Here is a 255-residue protein sequence, read N- to C-terminus: 5-oxoprolinase subunit A (255 aa).

Belongs to the LamB/PxpA family. In terms of assembly, forms a complex composed of PxpA, PxpB and PxpC.

The catalysed reaction is 5-oxo-L-proline + ATP + 2 H2O = L-glutamate + ADP + phosphate + H(+). In terms of biological role, catalyzes the cleavage of 5-oxoproline to form L-glutamate coupled to the hydrolysis of ATP to ADP and inorganic phosphate. This chain is 5-oxoprolinase subunit A, found in Nitrobacter hamburgensis (strain DSM 10229 / NCIMB 13809 / X14).